The primary structure comprises 221 residues: Urease accessory protein UreF (221 aa).

Belongs to the UreF family. As to quaternary structure, ureD, UreF and UreG form a complex that acts as a GTP-hydrolysis-dependent molecular chaperone, activating the urease apoprotein by helping to assemble the nickel containing metallocenter of UreC. The UreE protein probably delivers the nickel.

The protein localises to the cytoplasm. Its function is as follows. Required for maturation of urease via the functional incorporation of the urease nickel metallocenter. The chain is Urease accessory protein UreF from Microcystis aeruginosa (strain NIES-843 / IAM M-2473).